Here is an 804-residue protein sequence, read N- to C-terminus: Probable basic-leucine zipper transcription factor C (804 aa).

Disordered regions lie at residues 86-148 (FISP…NDIN) and 275-371 (YGNV…PKKR). Low complexity predominate over residues 90–145 (NNNNNNNNNNNNNNNNNNNNNNNNNNNNNNNNNNNNNNNNNNNNNNNNNNNNNNNN). The span at 275-291 (YGNVSDNSSPETNFSYA) shows a compositional bias: polar residues. Over residues 292-334 (SPSSPSSTQSQSSPYEQQPLSPNPTISLSSSISVTATTTTRPN) the composition is skewed to low complexity. Positions 335–356 (ATEKTKESSLKSKSKSNEKDKE) are enriched in basic and acidic residues. One can recognise a bZIP domain in the interval 415–478 (ALNYQFRKIK…DQYKLQEKQK (64 aa)). Residues 421–436 (RKIKNRESARRSRERK) form a basic motif region. The interval 443 to 450 (LEAKIAEI) is leucine-zipper. The segment at 670-693 (KNCNNNNENNNNNDNNKNSDDEKG) is disordered. Positions 672 to 685 (CNNNNENNNNNDNN) are enriched in low complexity.

The protein belongs to the bZIP family.

Its subcellular location is the nucleus. Probable transcriptional regulator. This Dictyostelium discoideum (Social amoeba) protein is Probable basic-leucine zipper transcription factor C (bzpC).